We begin with the raw amino-acid sequence, 311 residues long: Acetyl-coenzyme A carboxylase carboxyl transferase subunit alpha (311 aa).

The CoA carboxyltransferase C-terminal domain occupies asparagine 36–lysine 286.

Belongs to the AccA family. In terms of assembly, acetyl-CoA carboxylase is a heterohexamer composed of biotin carboxyl carrier protein (AccB), biotin carboxylase (AccC) and two subunits each of ACCase subunit alpha (AccA) and ACCase subunit beta (AccD).

Its subcellular location is the cytoplasm. It carries out the reaction N(6)-carboxybiotinyl-L-lysyl-[protein] + acetyl-CoA = N(6)-biotinyl-L-lysyl-[protein] + malonyl-CoA. It functions in the pathway lipid metabolism; malonyl-CoA biosynthesis; malonyl-CoA from acetyl-CoA: step 1/1. In terms of biological role, component of the acetyl coenzyme A carboxylase (ACC) complex. First, biotin carboxylase catalyzes the carboxylation of biotin on its carrier protein (BCCP) and then the CO(2) group is transferred by the carboxyltransferase to acetyl-CoA to form malonyl-CoA. This Campylobacter curvus (strain 525.92) protein is Acetyl-coenzyme A carboxylase carboxyl transferase subunit alpha.